The following is a 119-amino-acid chain: Ribonuclease P protein component (119 aa).

Belongs to the RnpA family. In terms of assembly, consists of a catalytic RNA component (M1 or rnpB) and a protein subunit.

It catalyses the reaction Endonucleolytic cleavage of RNA, removing 5'-extranucleotides from tRNA precursor.. RNaseP catalyzes the removal of the 5'-leader sequence from pre-tRNA to produce the mature 5'-terminus. It can also cleave other RNA substrates such as 4.5S RNA. The protein component plays an auxiliary but essential role in vivo by binding to the 5'-leader sequence and broadening the substrate specificity of the ribozyme. In Klebsiella pneumoniae (strain 342), this protein is Ribonuclease P protein component.